A 1072-amino-acid chain; its full sequence is MPKRLDINTILVIGSGPIVIGQAAEFDYSGTQACQSLKEEGYKVILVNSNPATIMTDTATADKVYIEPLTLEFVSRIIRKERPDAILPTLGGQTGLNMAVELAKSGVLDECGVEILGTKLSAIEQAEDRDLFRTLMQDLNEPTPPSEIIHNLDEAYGFVNEIGYPVIVRPAFTLGGTGGGICHNEEELIEIVTSGLKHSPVTQCLLEKSIAGCKEIEYEVMRDSNDNAIVVCNMENIDPVGVHTGDSIVVAPSQTLSDREYQMLRNTSLRIIRALGIEGGCNVQLALDPYSFQYYVIEVNPRVSRSSALASKATGYPIAKLAAKIAVGLTLDEIVNPVTQKTYACFEPALDYVVSKIPRWPFDKFESANRTLGTQMKATGEVMSIGRNLEESLLKAVRSLELGIYHLELDHLKELDKETMKKRIIKADDERLFIVAEAIRQGVTKEEINEWCEMDFFFLQKVENIVNMEREVKANVGNMEVLQTAKEMGFSDHYIAAAWNKTEREIYDMRKENNMMPVFKMVDTCAAEFESATPYYYSTYADENESIVTDRKSVVVLGSGPIRIGQGVEFDYATVHSVWAIKEAGYEAIIINNNPETVSTDFSISDKLYFEPLTIEDVMHIIDLEKPEGVIVQFGGQTAINLAAKLEEHGVKILGTSLEDLDRAEDRDKFEAALTKLGIPQPVGKTATTVEQAVAIAEEIGYPVLVRPSYVLGGRAMEIVYRQEELLHYMKNAVKVHADHPVLIDRYMVGKEIEVDAISDGENVFIPGIMEHIERAGVHSGDSIGVYPPQSLSEKLKEQIIEHTIALGKGLNIVGLLNIQFVVFKDQVYVIEVNPRASRTVPFLSKITGVPMANVATKVILGQDLVEQGYGTGYHPEEKEVYVKAPVFSFAKLRSVDTTLGPEMKSTGEVMGKDLTLEKALYKGLVASGINIPTHGSVIITVADKDKEEAMEIAKRFHEIGYNLLATAGTAQSLEEQNIPVQVVNKIDSEDYNLLDIIRQGKAQFVINTLTKGKQPARDGFRIRRESVENGVACLTSLDTTRAILRVLESMTFSAHSMKEITQTKRHEVVHA.

The tract at residues 1-401 (MPKRLDINTI…SLLKAVRSLE (401 aa)) is carboxyphosphate synthetic domain. Arginine 129, arginine 169, glycine 175, glycine 176, lysine 208, isoleucine 210, glutamate 215, glycine 241, valine 242, histidine 243, glutamine 284, and glutamate 298 together coordinate ATP. An ATP-grasp 1 domain is found at 133–327 (RTLMQDLNEP…IAKLAAKIAV (195 aa)). Mg(2+)-binding residues include glutamine 284, glutamate 298, and asparagine 300. Residues glutamine 284, glutamate 298, and asparagine 300 each contribute to the Mn(2+) site. The interval 402-546 (LGIYHLELDH…YSTYADENES (145 aa)) is oligomerization domain. The segment at 547–929 (IVTDRKSVVV…ALYKGLVASG (383 aa)) is carbamoyl phosphate synthetic domain. One can recognise an ATP-grasp 2 domain in the interval 671–861 (EAALTKLGIP…MANVATKVIL (191 aa)). ATP-binding residues include arginine 707, arginine 746, glutamate 752, glycine 777, valine 778, histidine 779, serine 780, glutamine 820, and glutamate 832. Positions 820, 832, and 834 each coordinate Mg(2+). Residues glutamine 820, glutamate 832, and asparagine 834 each coordinate Mn(2+). The region spanning 930–1072 (INIPTHGSVI…QTKRHEVVHA (143 aa)) is the MGS-like domain. The allosteric domain stretch occupies residues 930 to 1072 (INIPTHGSVI…QTKRHEVVHA (143 aa)).

It belongs to the CarB family. Composed of two chains; the small (or glutamine) chain promotes the hydrolysis of glutamine to ammonia, which is used by the large (or ammonia) chain to synthesize carbamoyl phosphate. Tetramer of heterodimers (alpha,beta)4. It depends on Mg(2+) as a cofactor. Mn(2+) is required as a cofactor.

It carries out the reaction hydrogencarbonate + L-glutamine + 2 ATP + H2O = carbamoyl phosphate + L-glutamate + 2 ADP + phosphate + 2 H(+). The enzyme catalyses hydrogencarbonate + NH4(+) + 2 ATP = carbamoyl phosphate + 2 ADP + phosphate + 2 H(+). The protein operates within amino-acid biosynthesis; L-arginine biosynthesis; carbamoyl phosphate from bicarbonate: step 1/1. It functions in the pathway pyrimidine metabolism; UMP biosynthesis via de novo pathway; (S)-dihydroorotate from bicarbonate: step 1/3. Large subunit of the glutamine-dependent carbamoyl phosphate synthetase (CPSase). CPSase catalyzes the formation of carbamoyl phosphate from the ammonia moiety of glutamine, carbonate, and phosphate donated by ATP, constituting the first step of 2 biosynthetic pathways, one leading to arginine and/or urea and the other to pyrimidine nucleotides. The large subunit (synthetase) binds the substrates ammonia (free or transferred from glutamine from the small subunit), hydrogencarbonate and ATP and carries out an ATP-coupled ligase reaction, activating hydrogencarbonate by forming carboxy phosphate which reacts with ammonia to form carbamoyl phosphate. This chain is Carbamoyl phosphate synthase large chain, found in Bacillus cereus (strain ATCC 14579 / DSM 31 / CCUG 7414 / JCM 2152 / NBRC 15305 / NCIMB 9373 / NCTC 2599 / NRRL B-3711).